The primary structure comprises 176 residues: Disulfide bond formation protein B (176 aa).

Residues 1–14 lie on the Cytoplasmic side of the membrane; the sequence is MLRFLNRCSRGRGA. Residues 15–31 traverse the membrane as a helical segment; that stretch reads WLLLAFTALALELTALY. The Periplasmic segment spans residues 32-49; that stretch reads FQHVMLLKPCVLCIYQRS. Cysteine 41 and cysteine 44 are joined by a disulfide. The helical transmembrane segment at 50 to 65 threads the bilayer; the sequence is ALWGVFAAGIVGAIAP. Over 66–71 the chain is Cytoplasmic; the sequence is SSLLRY. A helical transmembrane segment spans residues 72–89; it reads PAIALWIYSSYEGIRLAW. The Periplasmic segment spans residues 90–144; it reads KHTDILLNPSPFTTCDFFVSFPSWLPLDKWLPAIFNATGDCSERQWSFLSMEMPQ. An intrachain disulfide couples cysteine 104 to cysteine 130. A helical membrane pass occupies residues 145–163; the sequence is WLLGIFAAYLLIAVLVLIA. Residues 164–176 are Cytoplasmic-facing; that stretch reads QPFRSKRRDLFSR.

This sequence belongs to the DsbB family.

It is found in the cell inner membrane. Required for disulfide bond formation in some periplasmic proteins. Acts by oxidizing the DsbA protein. In Pectobacterium atrosepticum (strain SCRI 1043 / ATCC BAA-672) (Erwinia carotovora subsp. atroseptica), this protein is Disulfide bond formation protein B.